Reading from the N-terminus, the 432-residue chain is Cyclin-A2 (432 aa).

Met1 bears the N-acetylmethionine mark. The residue at position 5 (Ser5) is a Phosphoserine. Disordered regions lie at residues 26-45 (LQED…QQPR) and 55-75 (SGNP…VAPL). Ser55 bears the Phosphoserine mark.

Belongs to the cyclin family. Cyclin AB subfamily. Interacts with the CDK1 and CDK2 protein kinases to form serine/threonine kinase holoenzyme complexes. Interacts with CDK1 (hyperphosphorylated form in G1 and underphosphorylated forms in S and G2). Interacts with CDK2; the interaction increases from G1 to G2. Interacts (associated with CDK2 but not with CDK1) with SCAPER; regulates the activity of CCNA2/CDK2 by transiently maintaining CCNA2 in the cytoplasm. Forms a ternary complex with CDK2 and CDKN1B; CDKN1B inhibits the kinase activity of CDK2 through conformational rearrangements. Interacts with INCA1. In terms of assembly, (Microbial infection) Interacts with human cytomegalovirus protein UL32. Post-translationally, polyubiquitinated via 'Lys-11'-linked ubiquitin by the anaphase-promoting complex (APC/C), leading to its degradation by the proteasome. Deubiquitinated and stabilized by USP37 enables entry into S phase. Ubiquitinated during the G1 phase by the SCF(FBXO31) complex, leading to its proteasomal degradation.

The protein resides in the nucleus. Its subcellular location is the cytoplasm. In terms of biological role, cyclin which controls both the G1/S and the G2/M transition phases of the cell cycle. Functions through the formation of specific serine/threonine protein kinase holoenzyme complexes with the cyclin-dependent protein kinases CDK1 or CDK2. The cyclin subunit confers the substrate specificity of these complexes and differentially interacts with and activates CDK1 and CDK2 throughout the cell cycle. The polypeptide is Cyclin-A2 (Homo sapiens (Human)).